A 393-amino-acid polypeptide reads, in one-letter code: MGISLRLAEQFSAEEDGGGGGGNLVFSPLSIYSALSVVTAGARGTTLTELLAALGAPSRDALAKNAAEIARALAGGTATGGPRVAHACGLWHERTRSLKLAFRDAAAASFNAATRAVDFLANPEEARKEINSWVAAATENLIDTILPPGSVSTDTGLVVTSAIYFNGTWQTPFRKQDTKKDKFHLLDGHGTVDADFMRTGEDQYIAAHDGFKVLKMPYAHDHAAPQPSPRYYSMYILLPDERDGLSSLEDRMAAAGGGGGGEGFLSEHMPVRRVEVGEFRIPRFKLSFSRSVVRALRGVGVNAVFDRAELPDMIEGEPLRVSDVLHKAVIEVNEEGTEAAAATAVLMEGAARYAPPPPPREDFVADHPFAFFVVEESSGAVLFAGHVVDPTKS.

Positions 336 to 360 (GTEAAAATAVLMEGAARYAPPPPPR) are RCL.

Belongs to the serpin family.

Its function is as follows. Probable serine protease inhibitor. This is Putative serpin-Z6A from Oryza sativa subsp. japonica (Rice).